Reading from the N-terminus, the 430-residue chain is Protein trichome birefringence-like 24 (430 aa).

Residues 15–35 (VLLIKLISAILISFFAFRLFI) form a helical; Signal-anchor for type II membrane protein membrane-spanning segment. The short motif at 153–155 (GDS) is the GDS motif element. The DCXHWCLPGXXDXWN motif motif lies at 406–420 (DCLHWCLPGPFDYLN).

This sequence belongs to the PC-esterase family. TBL subfamily.

The protein localises to the membrane. Its function is as follows. May act as a bridging protein that binds pectin and other cell wall polysaccharides. Probably involved in maintaining esterification of pectins. May be involved in the specific O-acetylation of cell wall polymers. The sequence is that of Protein trichome birefringence-like 24 (TBL24) from Arabidopsis thaliana (Mouse-ear cress).